A 103-amino-acid chain; its full sequence is uncharacterized protein (103 aa).

The tract at residues Met-1–Arg-103 is disordered. Composition is skewed to basic residues over residues Arg-55–Ser-65 and Arg-74–Arg-84.

It belongs to the epstein-barr virus RPMS1 family.

This is an uncharacterized protein from Epstein-Barr virus (strain GD1) (HHV-4).